The primary structure comprises 146 residues: D-aminoacyl-tRNA deacylase (146 aa).

The Gly-cisPro motif, important for rejection of L-amino acids signature appears at 138-139 (GP).

The protein belongs to the DTD family. In terms of assembly, homodimer.

It is found in the cytoplasm. The catalysed reaction is glycyl-tRNA(Ala) + H2O = tRNA(Ala) + glycine + H(+). The enzyme catalyses a D-aminoacyl-tRNA + H2O = a tRNA + a D-alpha-amino acid + H(+). An aminoacyl-tRNA editing enzyme that deacylates mischarged D-aminoacyl-tRNAs. Also deacylates mischarged glycyl-tRNA(Ala), protecting cells against glycine mischarging by AlaRS. Acts via tRNA-based rather than protein-based catalysis; rejects L-amino acids rather than detecting D-amino acids in the active site. By recycling D-aminoacyl-tRNA to D-amino acids and free tRNA molecules, this enzyme counteracts the toxicity associated with the formation of D-aminoacyl-tRNA entities in vivo and helps enforce protein L-homochirality. The sequence is that of D-aminoacyl-tRNA deacylase from Xanthomonas euvesicatoria pv. vesicatoria (strain 85-10) (Xanthomonas campestris pv. vesicatoria).